The sequence spans 66 residues: Large ribosomal subunit protein uL29 (66 aa).

This sequence belongs to the universal ribosomal protein uL29 family.

The polypeptide is Large ribosomal subunit protein uL29 (Syntrophobacter fumaroxidans (strain DSM 10017 / MPOB)).